The chain runs to 624 residues: Na(+)/H(+) antiporter NhaA (624 aa).

The unknown stretch occupies residues 1–164 (MNPELPPNHL…TFFINGRRYD (164 aa)). The tract at residues 165–624 (GPWDVRSLSE…NAQAEEEKNP (460 aa)) is na(+)/H(+) antiporter NhaA. Helical transmembrane passes span 199–219 (GIML…ALGP), 240–260 (LSLR…VVGL), 279–299 (LPIA…LILV), 319–339 (GWGV…AMMG), 348–368 (VFLT…VAIF), 371–391 (GELH…LALL), 407–427 (IVLW…GIIL), 497–517 (FLVL…TSVF), 521–541 (IPLM…GFIT), 565–585 (GAGA…SQAF), and 596–616 (IAIF…LWNA).

It belongs to the NhaA Na(+)/H(+) (TC 2.A.33) antiporter family.

Its subcellular location is the cell inner membrane. The catalysed reaction is Na(+)(in) + 2 H(+)(out) = Na(+)(out) + 2 H(+)(in). Na(+)/H(+) antiporter that extrudes sodium in exchange for external protons. This Nitrosospira multiformis (strain ATCC 25196 / NCIMB 11849 / C 71) protein is Na(+)/H(+) antiporter NhaA.